Reading from the N-terminus, the 502-residue chain is Probable malate:quinone oxidoreductase (502 aa).

It belongs to the MQO family. FAD is required as a cofactor.

The enzyme catalyses (S)-malate + a quinone = a quinol + oxaloacetate. Its pathway is carbohydrate metabolism; tricarboxylic acid cycle; oxaloacetate from (S)-malate (quinone route): step 1/1. The chain is Probable malate:quinone oxidoreductase from Parasynechococcus marenigrum (strain WH8102).